Here is a 1023-residue protein sequence, read N- to C-terminus: 1-phosphatidylinositol 4,5-bisphosphate phosphodiesterase beta-4 (1023 aa).

One can recognise a PI-PLC X-box domain in the interval 149–299; that stretch reads QEMDHPLAHY…LKRKILIKKQ (151 aa). Active-site residues include H164 and H211. The region spanning 413–529 is the PI-PLC Y-box domain; it reads LSTMINYAQP…GYLLKPDFMR (117 aa). A C2 domain is found at 532–657; the sequence is DRTFDPFSET…SLRNEGNKPL (126 aa). Disordered regions lie at residues 711-742 and 930-958; these read ADVP…SELR and KISM…VREL. Composition is skewed to polar residues over residues 729–742 and 933–942; these read AKAN…SELR and MENSKAISQD. Position 734 is a phosphothreonine (T734). Basic and acidic residues predominate over residues 943–957; the sequence is KSIKNKAERERRVRE.

Requires Ca(2+) as cofactor. In terms of processing, the N-terminus is blocked. As to expression, preferentially expressed in the retina.

The protein localises to the cell membrane. It carries out the reaction a 1,2-diacyl-sn-glycero-3-phospho-(1D-myo-inositol-4,5-bisphosphate) + H2O = 1D-myo-inositol 1,4,5-trisphosphate + a 1,2-diacyl-sn-glycerol + H(+). The catalysed reaction is a 1,2-diacyl-sn-glycero-3-phospho-(1D-myo-inositol) + H2O = 1D-myo-inositol 1-phosphate + a 1,2-diacyl-sn-glycerol + H(+). In terms of biological role, activated phosphatidylinositol-specific phospholipase C enzymes catalyze the production of the second messenger molecules diacylglycerol (DAG) and inositol 1,4,5-trisphosphate (IP3) involved in G-protein coupled receptor signaling pathways. PLCB4 is a direct effector of the endothelin receptor signaling pathway that plays an essential role in lower jaw and middle ear structures development. The protein is 1-phosphatidylinositol 4,5-bisphosphate phosphodiesterase beta-4 (PLCB4) of Bos taurus (Bovine).